Reading from the N-terminus, the 1152-residue chain is ATP-dependent helicase/deoxyribonuclease subunit B (1152 aa).

Residues 1–338 (MSIRFIYGRA…LVRDRNYRFR (338 aa)) form the UvrD-like helicase ATP-binding domain. 8–15 (GRAGSGKS) serves as a coordination point for ATP. The UvrD-like helicase C-terminal domain maps to 276 to 579 (PYRFKNSEEL…NVGDIARIKG (304 aa)). [4Fe-4S] cluster contacts are provided by Cys-785, Cys-1106, Cys-1109, and Cys-1115.

It belongs to the helicase family. AddB/RexB type 1 subfamily. Heterodimer of AddA and AddB. Requires Mg(2+) as cofactor. It depends on [4Fe-4S] cluster as a cofactor.

The heterodimer acts as both an ATP-dependent DNA helicase and an ATP-dependent, dual-direction single-stranded exonuclease. Recognizes the chi site generating a DNA molecule suitable for the initiation of homologous recombination. The AddB subunit has 5' -&gt; 3' nuclease activity but not helicase activity. The protein is ATP-dependent helicase/deoxyribonuclease subunit B of Clostridium botulinum (strain Alaska E43 / Type E3).